We begin with the raw amino-acid sequence, 186 residues long: Elongation factor P (186 aa).

This sequence belongs to the elongation factor P family.

The protein localises to the cytoplasm. It functions in the pathway protein biosynthesis; polypeptide chain elongation. In terms of biological role, involved in peptide bond synthesis. Stimulates efficient translation and peptide-bond synthesis on native or reconstituted 70S ribosomes in vitro. Probably functions indirectly by altering the affinity of the ribosome for aminoacyl-tRNA, thus increasing their reactivity as acceptors for peptidyl transferase. This is Elongation factor P from Prochlorococcus marinus (strain MIT 9301).